The primary structure comprises 372 residues: Protein phosphatase Mn(2+)-dependent 1K (372 aa).

The N-terminal 29 residues, 1 to 29 (MSTAALITLVRSGGNQVRRRVLLSSRLLQ), are a transit peptide targeting the mitochondrion. The interval 34–55 (VTPTCHSSTSEPRCSRFDPDGS) is disordered. The tract at residues 46–61 (RCSRFDPDGSGSPATW) is critical for association with the BCKDH complex. In terms of domain architecture, PPM-type phosphatase spans 94-346 (NVGCASQIGK…DNSTAVVVPF (253 aa)). Asp127 and Gly128 together coordinate Mn(2+). Residue Ser248 is modified to Phosphoserine. Residues Asp298 and Asp337 each coordinate Mn(2+).

This sequence belongs to the PP2C family. Monomer. Interacts with E1 and E2 components of the branched-chain alpha-ketoacid dehydrogenase (BCKDH) complex; this interaction requires colocalization in mitochondria. Interacts with BCKDHA but not with BCKDHB of the E1 component. Interacts with the 24-meric E2 core composed of DBT monomers with a 24:1 stoichiometry; the N-terminal region (residues 49-61) of PPM1K and C-terminal linker of the lipoyl domain of DBT (residues 145-160) are critical for this interaction, whereas the lipoyl prosthetic group is dispensable. Competes with BCKDK for binding to the E2 core; this interaction is modulated by branched-chain alpha-keto acids. At steady state, BCKDH holoenzyme preferentially binds BCKDK and BCKDHA is phosphorylated. In response to high levels of branched-chain alpha-keto acids, the inhibitory BCKDK is replaced by activating PPM1K leading to BCKDHA dephosphorylation and BCAA degradation. The cofactor is Mn(2+).

The protein localises to the mitochondrion matrix. It carries out the reaction O-phospho-L-seryl-[3-methyl-2-oxobutanoate dehydrogenase] + H2O = L-seryl-[3-methyl-2-oxobutanoate dehydrogenase] + phosphate. The catalysed reaction is O-phospho-L-seryl-[protein] + H2O = L-seryl-[protein] + phosphate. It participates in protein modification. Up-regulated upon interaction with the 24-meric DBT/E2 core of the BCKDH complex. Inhibited by Mg(2+) and Ca(2+) ions likely by competing with Mn(2+) ions for binding to the same metal-binding sites. In terms of biological role, serine/threonine-protein phosphatase component of macronutrients metabolism. Forms a functional kinase and phosphatase pair with BCKDK, serving as a metabolic regulatory node that coordinates branched-chain amino acids (BCAAs) with glucose and lipid metabolism via two distinct phosphoprotein targets: mitochondrial BCKDHA subunit of the branched-chain alpha-ketoacid dehydrogenase (BCKDH) complex and cytosolic ACLY, a lipogenic enzyme of Krebs cycle. At high levels of branched-chain ketoacids, dephosphorylates and activates mitochondrial BCKDH complex, a multisubunit complex consisting of three multimeric components each involved in different steps of BCAA catabolism: E1 composed of BCKDHA and BCKDHB, E2 core composed of DBT monomers, and E3 composed of DLD monomers. Tightly associates with the E2 component of BCKDH complex and dephosphorylates BCKDHA on Ser-337. Regulates the reversible phosphorylation of ACLY in response to changes in cellular carbohydrate abundance such as occurs during fasting to feeding metabolic transition. At fasting state, appears to dephosphorylate ACLY on Ser-455 and inactivate it. Refeeding stimulates MLXIPL/ChREBP transcription factor, leading to increased BCKDK to PPM1K expression ratio, phosphorylation and activation of ACLY that ultimately results in the generation of malonyl-CoA and oxaloacetate immediate substrates of de novo lipogenesis and gluconeogenesis, respectively. Recognizes phosphosites having SxS or RxxS motifs and strictly depends on Mn(2+) ions for the phosphatase activity. Regulates Ca(2+)-induced opening of mitochondrial transition pore and apoptotic cell death. This is Protein phosphatase Mn(2+)-dependent 1K from Homo sapiens (Human).